Here is a 430-residue protein sequence, read N- to C-terminus: 2-deoxy-scyllo-inosose synthase (430 aa).

NAD(+)-binding positions include D42, 73-76 (EVHK), 105-109 (GVTGN), 129-130 (TT), 140-142 (SLK), and 151-152 (KN). K142 is a catalytic residue. E184 serves as a coordination point for Co(2+). The active site involves E244. Positions 247 and 263 each coordinate Co(2+). The disordered stretch occupies residues 371–430 (RGGAGGGAAEPAAARTGPVPDGPEAAVPATPGPVPAGPAAAAPLPSGPAPTAPAAAGPVP). Low complexity predominate over residues 379 to 399 (AEPAAARTGPVPDGPEAAVPA).

The protein belongs to the sugar phosphate cyclases superfamily. DOI synthase family. It depends on NAD(+) as a cofactor. Requires Co(2+) as cofactor.

It carries out the reaction D-glucose 6-phosphate = 2-deoxy-L-scyllo-inosose + phosphate. Its pathway is metabolic intermediate biosynthesis; 2-deoxystreptamine biosynthesis; 2-deoxystreptamine from D-glucose 6-phosphate: step 1/4. The protein operates within antibiotic biosynthesis; neomycin biosynthesis. Functionally, catalyzes the intramolecular carbocycle formation from D-glucose-6-phosphate to 2-deoxy-scyllo-inosose (DOI). This Streptomyces fradiae (Streptomyces roseoflavus) protein is 2-deoxy-scyllo-inosose synthase (neoC).